The chain runs to 136 residues: Small ribosomal subunit protein uS9 (136 aa).

The protein belongs to the universal ribosomal protein uS9 family.

In Synechococcus sp. (strain JA-2-3B'a(2-13)) (Cyanobacteria bacterium Yellowstone B-Prime), this protein is Small ribosomal subunit protein uS9.